Here is a 333-residue protein sequence, read N- to C-terminus: Nucleoid-associated protein APJL_0454 (333 aa).

This sequence belongs to the YejK family.

It localises to the cytoplasm. It is found in the nucleoid. The chain is Nucleoid-associated protein APJL_0454 from Actinobacillus pleuropneumoniae serotype 3 (strain JL03).